The following is a 248-amino-acid chain: Isoprenyl transferase (248 aa).

Aspartate 23 is an active-site residue. Aspartate 23 provides a ligand contact to Mg(2+). Substrate is bound by residues 24–27, tryptophan 28, arginine 36, histidine 40, and 68–70; these read GNGR and STE. The Proton acceptor role is filled by asparagine 71. Residues tryptophan 72, arginine 74, arginine 185, and 191-193 contribute to the substrate site; that span reads RIS. Glutamate 204 lines the Mg(2+) pocket.

Belongs to the UPP synthase family. Homodimer. Requires Mg(2+) as cofactor.

Its function is as follows. Catalyzes the condensation of isopentenyl diphosphate (IPP) with allylic pyrophosphates generating different type of terpenoids. The protein is Isoprenyl transferase of Neisseria meningitidis serogroup B (strain ATCC BAA-335 / MC58).